The chain runs to 244 residues: Orotidine 5'-phosphate decarboxylase (244 aa).

Substrate is bound by residues Asp10, Lys32, 59-68, Thr122, Arg184, Gln193, Gly213, and Arg214; that span reads DLKLHDIPNT. Lys61 acts as the Proton donor in catalysis.

It belongs to the OMP decarboxylase family. Type 1 subfamily. Homodimer.

The catalysed reaction is orotidine 5'-phosphate + H(+) = UMP + CO2. The protein operates within pyrimidine metabolism; UMP biosynthesis via de novo pathway; UMP from orotate: step 2/2. Catalyzes the decarboxylation of orotidine 5'-monophosphate (OMP) to uridine 5'-monophosphate (UMP). The chain is Orotidine 5'-phosphate decarboxylase from Bacillus caldolyticus.